A 415-amino-acid polypeptide reads, in one-letter code: Serine hydroxymethyltransferase 1 (415 aa).

Residues leucine 122 and 126 to 128 (GHL) each bind (6S)-5,6,7,8-tetrahydrofolate. Lysine 230 carries the N6-(pyridoxal phosphate)lysine modification.

Belongs to the SHMT family. Homodimer. Requires pyridoxal 5'-phosphate as cofactor.

Its subcellular location is the cytoplasm. The enzyme catalyses (6R)-5,10-methylene-5,6,7,8-tetrahydrofolate + glycine + H2O = (6S)-5,6,7,8-tetrahydrofolate + L-serine. The protein operates within one-carbon metabolism; tetrahydrofolate interconversion. Its pathway is amino-acid biosynthesis; glycine biosynthesis; glycine from L-serine: step 1/1. In terms of biological role, catalyzes the reversible interconversion of serine and glycine with tetrahydrofolate (THF) serving as the one-carbon carrier. This reaction serves as the major source of one-carbon groups required for the biosynthesis of purines, thymidylate, methionine, and other important biomolecules. Also exhibits THF-independent aldolase activity toward beta-hydroxyamino acids, producing glycine and aldehydes, via a retro-aldol mechanism. The protein is Serine hydroxymethyltransferase 1 of Burkholderia mallei (strain ATCC 23344).